The primary structure comprises 170 residues: Lipoprotein signal peptidase (170 aa).

A run of 3 helical transmembrane segments spans residues Ile-13–Ile-33, Leu-72–Glu-92, and Ile-96–Ile-113. Active-site residues include Asp-124 and Asp-146. The chain crosses the membrane as a helical span at residues Phe-142–Phe-162.

Belongs to the peptidase A8 family.

It is found in the cell inner membrane. The enzyme catalyses Release of signal peptides from bacterial membrane prolipoproteins. Hydrolyzes -Xaa-Yaa-Zaa-|-(S,diacylglyceryl)Cys-, in which Xaa is hydrophobic (preferably Leu), and Yaa (Ala or Ser) and Zaa (Gly or Ala) have small, neutral side chains.. Its pathway is protein modification; lipoprotein biosynthesis (signal peptide cleavage). In terms of biological role, this protein specifically catalyzes the removal of signal peptides from prolipoproteins. In Borrelia turicatae (strain 91E135), this protein is Lipoprotein signal peptidase.